Reading from the N-terminus, the 255-residue chain is Thiazole synthase (255 aa).

Lys-96 (schiff-base intermediate with DXP) is an active-site residue. Residues Gly-157, 183-184, and 205-206 contribute to the 1-deoxy-D-xylulose 5-phosphate site; these read AG and NT.

Belongs to the ThiG family. As to quaternary structure, homotetramer. Forms heterodimers with either ThiH or ThiS.

The protein localises to the cytoplasm. The enzyme catalyses [ThiS sulfur-carrier protein]-C-terminal-Gly-aminoethanethioate + 2-iminoacetate + 1-deoxy-D-xylulose 5-phosphate = [ThiS sulfur-carrier protein]-C-terminal Gly-Gly + 2-[(2R,5Z)-2-carboxy-4-methylthiazol-5(2H)-ylidene]ethyl phosphate + 2 H2O + H(+). It participates in cofactor biosynthesis; thiamine diphosphate biosynthesis. Catalyzes the rearrangement of 1-deoxy-D-xylulose 5-phosphate (DXP) to produce the thiazole phosphate moiety of thiamine. Sulfur is provided by the thiocarboxylate moiety of the carrier protein ThiS. In vitro, sulfur can be provided by H(2)S. The sequence is that of Thiazole synthase from Bacillus licheniformis (strain ATCC 14580 / DSM 13 / JCM 2505 / CCUG 7422 / NBRC 12200 / NCIMB 9375 / NCTC 10341 / NRRL NRS-1264 / Gibson 46).